The sequence spans 112 residues: uncharacterized protein (112 aa).

A helical transmembrane segment spans residues 85 to 105 (IVQLIILFAIIITNPNAIELI).

The protein belongs to the M.jannaschii MJ0023/MJ0349/MJ1072/MJ1074/MJ1107/MJECL16 family.

It localises to the membrane. This is an uncharacterized protein from Methanocaldococcus jannaschii (strain ATCC 43067 / DSM 2661 / JAL-1 / JCM 10045 / NBRC 100440) (Methanococcus jannaschii).